The following is a 289-amino-acid chain: MMNFILVLLIVAMIGTILVSESKYLFSKPVCKNCGVKAVTLPVDISAGKLAKVAEAVKKQTEEIKTLLKQKQSAPKAPELTNPIEHIKASTTVVSGANGLENVIDEDLPFSDFKGVPVAETTVEGMIKGIRPPTYADPRVMNPALAAAPVQFSDPTQFGTFGVTDDVSPAFSTEDKIPKTNAKISSDISVEGYENSYDANGARLVMDGKVVKSECQLPSYQIRNSKHHTQLPMRSLNEPPPMVEDLVDESLFEGLQGYPVDEKLDLLTPPGTATPSSEWAAINYGLTNN.

Residues 1–21 (MMNFILVLLIVAMIGTILVSE) form a hydrophobic region.

As to quaternary structure, interacts with the major capsid protein.

The protein resides in the virion. Its function is as follows. One of the minor capsid proteins that constitute a network internal to the major capsid proteins and outside the lipid membrane. The minor capsid proteins glue and stabilize the capsomers. The protein is Minor capsid protein P10 of Chlorella (PBCV-1).